Reading from the N-terminus, the 565-residue chain is CTP synthase (565 aa).

The tract at residues 1 to 272 (MARPKNVKHI…DLRVMKKLGL (272 aa)) is amidoligase domain. S18 lines the CTP pocket. Residue S18 coordinates UTP. Position 19–24 (19–24 (SLGKGI)) interacts with ATP. Residue Y59 coordinates L-glutamine. D76 is a binding site for ATP. Mg(2+)-binding residues include D76 and E146. Residues 153-155 (DIE), 193-198 (KTKPTQ), and K229 each bind CTP. Residues 193–198 (KTKPTQ) and K229 contribute to the UTP site. The Glutamine amidotransferase type-1 domain occupies 299–543 (TIGVCGKYTE…VAAAKEYEKG (245 aa)). L-glutamine is bound at residue G363. The Nucleophile; for glutamine hydrolysis role is filled by C390. L-glutamine is bound by residues 391–394 (LGMQ), E414, and R471. Catalysis depends on residues H516 and E518.

It belongs to the CTP synthase family. As to quaternary structure, homotetramer.

The catalysed reaction is UTP + L-glutamine + ATP + H2O = CTP + L-glutamate + ADP + phosphate + 2 H(+). The enzyme catalyses L-glutamine + H2O = L-glutamate + NH4(+). It carries out the reaction UTP + NH4(+) + ATP = CTP + ADP + phosphate + 2 H(+). It participates in pyrimidine metabolism; CTP biosynthesis via de novo pathway; CTP from UDP: step 2/2. Allosterically activated by GTP, when glutamine is the substrate; GTP has no effect on the reaction when ammonia is the substrate. The allosteric effector GTP functions by stabilizing the protein conformation that binds the tetrahedral intermediate(s) formed during glutamine hydrolysis. Inhibited by the product CTP, via allosteric rather than competitive inhibition. Catalyzes the ATP-dependent amination of UTP to CTP with either L-glutamine or ammonia as the source of nitrogen. Regulates intracellular CTP levels through interactions with the four ribonucleotide triphosphates. The chain is CTP synthase from Chlorobium phaeobacteroides (strain DSM 266 / SMG 266 / 2430).